The chain runs to 938 residues: Respiratory burst oxidase homolog protein C (938 aa).

The tract at residues 1 to 63 is disordered; sequence MQNSENHHPH…DIGTSAGAGA (63 aa). Residues 1–369 lie on the Cytoplasmic side of the membrane; it reads MQNSENHHPH…MYFLLDNWQR (369 aa). Positions 115–141 form a coiled coil; sequence ASLVRNASSRIRQVSQELKRLASLNKR. EF-hand-like regions lie at residues 185 to 195 and 222 to 233; these read TAPTTGLLPRA and RNITTDSINKAQ. EF-hand domains follow at residues 245 to 280 and 289 to 324; these read SFDT…SASA and QSDE…APNQ. Aspartate 258, aspartate 260, aspartate 262, arginine 264, and glutamate 269 together coordinate Ca(2+). A helical transmembrane segment spans residues 370–390; it reads VWVLLLWIGIMAVLFTWKYIQ. The Extracellular portion of the chain corresponds to 391 to 402; it reads YKQKAAYDVMGP. Residues 403–423 traverse the membrane as a helical segment; sequence CVCLAKGAAETIKLNMAIILL. The Ferric oxidoreductase domain maps to 408–565; sequence KGAAETIKLN…LFIIVYTLLI (158 aa). The Cytoplasmic segment spans residues 424–454; that stretch reads PVCRNTITWLRNKTRLGSAVPFDDNLNFHKV. Residues 455-475 traverse the membrane as a helical segment; it reads IAVAIALGVAIHGLAHLTCDF. The Extracellular portion of the chain corresponds to 476–509; sequence PKLLNASEEAYEPMIYYFGEQPESYWWFVRGVEG. The helical transmembrane segment at 510-530 threads the bilayer; that stretch reads VTGIIMVVLMAIAFTLATPWF. Over 531-545 the chain is Cytoplasmic; it reads RRGRVSFPKPFHKLT. Residues 546-566 traverse the membrane as a helical segment; the sequence is GFNAFWYSHHLFIIVYTLLIV. Over 567 to 580 the chain is Extracellular; that stretch reads HGEKLYITKDWYKR. A helical transmembrane segment spans residues 581–599; the sequence is STWMYLTVPLVLYAGERLL. In terms of domain architecture, FAD-binding FR-type spans 599 to 727; it reads LRAFRSSIKA…DGPYGAPAQD (129 aa). At 600–732 the chain is on the cytoplasmic side; it reads RAFRSSIKAV…APAQDYKQYE (133 aa). Residues 733–753 traverse the membrane as a helical segment; it reads VVLLVGLGIGATPMISIVKDI. Residues 754–938 lie on the Extracellular side of the membrane; it reads VNNMKAMDEE…TKFDFHKENF (185 aa). Residues 762 to 796 are disordered; it reads EEENSLENGNGMSNAAQNASPNMAQKRGKSSSASG. A compositionally biased stretch (polar residues) spans 767-784; it reads LENGNGMSNAAQNASPNM.

The protein belongs to the RBOH (TC 5.B.1.3) family. In terms of assembly, monomer and homodimer. Phosphorylated by CPK. As to expression, expressed in leaves.

It is found in the membrane. Its function is as follows. Calcium-dependent NADPH oxidase that generates superoxide. May be responsible for the oxidative burst in response to pathogen attack in the leaves. The sequence is that of Respiratory burst oxidase homolog protein C (RBOHC) from Solanum tuberosum (Potato).